The chain runs to 656 residues: DNA mismatch repair protein MutL (656 aa).

The disordered stretch occupies residues 385 to 427 (DNSDSLTEQNSTDYTVNQPETGSVSEKITDRTVESSNEFTDRT). Polar residues predominate over residues 387–410 (SDSLTEQNSTDYTVNQPETGSVSE). Basic and acidic residues predominate over residues 411–427 (KITDRTVESSNEFTDRT).

Belongs to the DNA mismatch repair MutL/HexB family.

Functionally, this protein is involved in the repair of mismatches in DNA. It is required for dam-dependent methyl-directed DNA mismatch repair. May act as a 'molecular matchmaker', a protein that promotes the formation of a stable complex between two or more DNA-binding proteins in an ATP-dependent manner without itself being part of a final effector complex. The polypeptide is DNA mismatch repair protein MutL (Lactococcus lactis subsp. cremoris (strain SK11)).